We begin with the raw amino-acid sequence, 136 residues long: Nucleoside diphosphate kinase (136 aa).

ATP contacts are provided by lysine 10, phenylalanine 58, arginine 86, threonine 92, arginine 104, and asparagine 114. The Pros-phosphohistidine intermediate role is filled by histidine 117.

Belongs to the NDK family. In terms of assembly, homotetramer. Mg(2+) serves as cofactor.

The protein resides in the cytoplasm. The catalysed reaction is a 2'-deoxyribonucleoside 5'-diphosphate + ATP = a 2'-deoxyribonucleoside 5'-triphosphate + ADP. The enzyme catalyses a ribonucleoside 5'-diphosphate + ATP = a ribonucleoside 5'-triphosphate + ADP. Major role in the synthesis of nucleoside triphosphates other than ATP. The ATP gamma phosphate is transferred to the NDP beta phosphate via a ping-pong mechanism, using a phosphorylated active-site intermediate. The chain is Nucleoside diphosphate kinase from Mycolicibacterium paratuberculosis (strain ATCC BAA-968 / K-10) (Mycobacterium paratuberculosis).